A 196-amino-acid polypeptide reads, in one-letter code: Holliday junction branch migration complex subunit RuvA (196 aa).

The segment at methionine 1–alanine 63 is domain I. A domain II region spans residues glutamate 64 to proline 142. The interval proline 142–valine 146 is flexible linker. The interval serine 147–leucine 196 is domain III.

The protein belongs to the RuvA family. Homotetramer. Forms an RuvA(8)-RuvB(12)-Holliday junction (HJ) complex. HJ DNA is sandwiched between 2 RuvA tetramers; dsDNA enters through RuvA and exits via RuvB. An RuvB hexamer assembles on each DNA strand where it exits the tetramer. Each RuvB hexamer is contacted by two RuvA subunits (via domain III) on 2 adjacent RuvB subunits; this complex drives branch migration. In the full resolvosome a probable DNA-RuvA(4)-RuvB(12)-RuvC(2) complex forms which resolves the HJ.

Its subcellular location is the cytoplasm. Functionally, the RuvA-RuvB-RuvC complex processes Holliday junction (HJ) DNA during genetic recombination and DNA repair, while the RuvA-RuvB complex plays an important role in the rescue of blocked DNA replication forks via replication fork reversal (RFR). RuvA specifically binds to HJ cruciform DNA, conferring on it an open structure. The RuvB hexamer acts as an ATP-dependent pump, pulling dsDNA into and through the RuvAB complex. HJ branch migration allows RuvC to scan DNA until it finds its consensus sequence, where it cleaves and resolves the cruciform DNA. The protein is Holliday junction branch migration complex subunit RuvA of Parabacteroides distasonis (strain ATCC 8503 / DSM 20701 / CIP 104284 / JCM 5825 / NCTC 11152).